Here is a 369-residue protein sequence, read N- to C-terminus: tRNA 2-selenouridine synthase (369 aa).

Residues 12–136 (FLDDIPLMDV…LRNFLFETTR (125 aa)) enclose the Rhodanese domain. Cys95 (S-selanylcysteine intermediate) is an active-site residue.

It belongs to the SelU family. In terms of assembly, monomer.

It carries out the reaction 5-methylaminomethyl-2-thiouridine(34) in tRNA + selenophosphate + (2E)-geranyl diphosphate + H2O + H(+) = 5-methylaminomethyl-2-selenouridine(34) in tRNA + (2E)-thiogeraniol + phosphate + diphosphate. The catalysed reaction is 5-methylaminomethyl-2-thiouridine(34) in tRNA + (2E)-geranyl diphosphate = 5-methylaminomethyl-S-(2E)-geranyl-thiouridine(34) in tRNA + diphosphate. The enzyme catalyses 5-methylaminomethyl-S-(2E)-geranyl-thiouridine(34) in tRNA + selenophosphate + H(+) = 5-methylaminomethyl-2-(Se-phospho)selenouridine(34) in tRNA + (2E)-thiogeraniol. It catalyses the reaction 5-methylaminomethyl-2-(Se-phospho)selenouridine(34) in tRNA + H2O = 5-methylaminomethyl-2-selenouridine(34) in tRNA + phosphate. Involved in the post-transcriptional modification of the uridine at the wobble position (U34) of tRNA(Lys), tRNA(Glu) and tRNA(Gln). Catalyzes the conversion of 2-thiouridine (S2U-RNA) to 2-selenouridine (Se2U-RNA). Acts in a two-step process involving geranylation of 2-thiouridine (S2U) to S-geranyl-2-thiouridine (geS2U) and subsequent selenation of the latter derivative to 2-selenouridine (Se2U) in the tRNA chain. This Pseudomonas aeruginosa (strain ATCC 15692 / DSM 22644 / CIP 104116 / JCM 14847 / LMG 12228 / 1C / PRS 101 / PAO1) protein is tRNA 2-selenouridine synthase.